Consider the following 199-residue polypeptide: Large ribosomal subunit protein bL25 (199 aa).

It belongs to the bacterial ribosomal protein bL25 family. CTC subfamily. As to quaternary structure, part of the 50S ribosomal subunit; part of the 5S rRNA/L5/L18/L25 subcomplex. Contacts the 5S rRNA. Binds to the 5S rRNA independently of L5 and L18.

Functionally, this is one of the proteins that binds to the 5S RNA in the ribosome where it forms part of the central protuberance. In Syntrophobacter fumaroxidans (strain DSM 10017 / MPOB), this protein is Large ribosomal subunit protein bL25.